The chain runs to 591 residues: MDQYEVLEQIGKGAFGSALLVRHKLEKKKYVLKKIRLARQTDRTRRSAHQEMQLIATVRNPFIVEYKDSWVEKGCYVCIVIGYCEGGDMAEAIKRANGTYFSEEKLCKWLVQLLMALDYLHANHILHRDVKCSNIFIARDQSIRLGDFGLAKILTSDDLASSVVGTPSYMCPELLADIPYGTKSDIWSLGCCIYEMTALRPAFKAFDMQALINKITKSIVSPLPTKYSGAFRGLIKSMLRKSPEHRPSAAQLLKHPQLQPYVLQVQLKSSPTRNILPIHQSLTDKVKKMTFPSDVVDSARRRMARRNSLGNERTVTFSKPSPERNSVSSTRSIKEYTTTQSVEGLSVDSSEAGDEVTSKAIITKTSSILRTPKSLPAKTYTARNQLEPPKTSYNRTYRSELPSKTTPNKIARPARRASLPLSTYETPTKRSISILEQLDSPDVSVNAPRIDRIAEFPLASSEDPLLPIHNKLSPGHGSCSTPPFINRSITKDKCTIQVLRTDGDNGSDSSGRNATAASSRGSNDSRQQRFDTSSFQQRAEALEGLLEFSAQLLQQERYEELGILLKPFGPEKASPRETAIWLTKSFKETAS.

The region spanning 4–258 is the Protein kinase domain; the sequence is YEVLEQIGKG…AAQLLKHPQL (255 aa). ATP contacts are provided by residues 10-18 and Lys-33; that span reads IGKGAFGSA. Asp-129 serves as the catalytic Proton acceptor. 3 disordered regions span residues 309-331, 387-408, and 500-534; these read LGNE…SSTR, EPPK…TTPN, and RTDG…DTSS. Polar residues-rich tracts occupy residues 391–408 and 504–534; these read TSYN…TTPN and DNGS…DTSS.

This sequence belongs to the protein kinase superfamily. NEK Ser/Thr protein kinase family. NIMA subfamily.

The enzyme catalyses L-seryl-[protein] + ATP = O-phospho-L-seryl-[protein] + ADP + H(+). It catalyses the reaction L-threonyl-[protein] + ATP = O-phospho-L-threonyl-[protein] + ADP + H(+). In terms of biological role, may be involved in plant development processes. The sequence is that of Serine/threonine-protein kinase Nek2 (NEK2) from Oryza sativa subsp. indica (Rice).